A 554-amino-acid polypeptide reads, in one-letter code: Glucose-6-phosphate isomerase 1 (554 aa).

The active-site Proton donor is glutamate 359. Catalysis depends on residues histidine 390 and lysine 518.

The protein belongs to the GPI family.

It localises to the cytoplasm. It carries out the reaction alpha-D-glucose 6-phosphate = beta-D-fructose 6-phosphate. It functions in the pathway carbohydrate biosynthesis; gluconeogenesis. It participates in carbohydrate degradation; glycolysis; D-glyceraldehyde 3-phosphate and glycerone phosphate from D-glucose: step 2/4. Catalyzes the reversible isomerization of glucose-6-phosphate to fructose-6-phosphate. In Pseudomonas putida (strain ATCC 47054 / DSM 6125 / CFBP 8728 / NCIMB 11950 / KT2440), this protein is Glucose-6-phosphate isomerase 1.